Consider the following 230-residue polypeptide: Flagellar L-ring protein (230 aa).

The signal sequence occupies residues 1–16 (MYLVFGIIFTSVIVTS). Cysteine 17 carries N-palmitoyl cysteine lipidation. A lipid anchor (S-diacylglycerol cysteine) is attached at cysteine 17.

Belongs to the FlgH family. As to quaternary structure, the basal body constitutes a major portion of the flagellar organelle and consists of four rings (L,P,S, and M) mounted on a central rod.

The protein localises to the cell outer membrane. It is found in the bacterial flagellum basal body. Functionally, assembles around the rod to form the L-ring and probably protects the motor/basal body from shearing forces during rotation. This is Flagellar L-ring protein from Bartonella bacilliformis (strain ATCC 35685 / KC583 / Herrer 020/F12,63).